Consider the following 336-residue polypeptide: Phosphate acyltransferase (336 aa).

It belongs to the PlsX family. As to quaternary structure, homodimer. Probably interacts with PlsY.

The protein localises to the cytoplasm. It carries out the reaction a fatty acyl-[ACP] + phosphate = an acyl phosphate + holo-[ACP]. It participates in lipid metabolism; phospholipid metabolism. Its function is as follows. Catalyzes the reversible formation of acyl-phosphate (acyl-PO(4)) from acyl-[acyl-carrier-protein] (acyl-ACP). This enzyme utilizes acyl-ACP as fatty acyl donor, but not acyl-CoA. In Pseudomonas putida (strain ATCC 700007 / DSM 6899 / JCM 31910 / BCRC 17059 / LMG 24140 / F1), this protein is Phosphate acyltransferase.